The sequence spans 161 residues: RNA pyrophosphohydrolase (161 aa).

The Nudix hydrolase domain occupies 12–154 (PYRPGVGMMI…KRKLYQAVVK (143 aa)). Positions 46–67 (GGIVPGETPSIAAMREMLEEIG) match the Nudix box motif.

Belongs to the Nudix hydrolase family. RppH subfamily. A divalent metal cation is required as a cofactor.

In terms of biological role, accelerates the degradation of transcripts by removing pyrophosphate from the 5'-end of triphosphorylated RNA, leading to a more labile monophosphorylated state that can stimulate subsequent ribonuclease cleavage. The chain is RNA pyrophosphohydrolase from Rickettsia typhi (strain ATCC VR-144 / Wilmington).